A 117-amino-acid polypeptide reads, in one-letter code: Large ribosomal subunit protein bL19 (117 aa).

This sequence belongs to the bacterial ribosomal protein bL19 family.

This protein is located at the 30S-50S ribosomal subunit interface and may play a role in the structure and function of the aminoacyl-tRNA binding site. In Christiangramia forsetii (strain DSM 17595 / CGMCC 1.15422 / KT0803) (Gramella forsetii), this protein is Large ribosomal subunit protein bL19.